The chain runs to 444 residues: Transposase for insertion sequence element IS1557 (444 aa).

Residues 273 to 292 (PKWGRGRPGKNAAPRPGRER) are disordered.

The protein belongs to the transposase 12 family.

This chain is Transposase for insertion sequence element IS1557, found in Mycobacterium tuberculosis (strain CDC 1551 / Oshkosh).